The following is a 948-amino-acid chain: Valine--tRNA ligase (948 aa).

The 'HIGH' region motif lies at 40 to 50 (PNVTGSLHMGH). Residues 551–555 (KMSKS) carry the 'KMSKS' region motif. Lys-554 is an ATP binding site. Positions 879-947 (LIDKGAELAR…LAEQHARISS (69 aa)) form a coiled coil.

It belongs to the class-I aminoacyl-tRNA synthetase family. ValS type 1 subfamily. In terms of assembly, monomer.

It localises to the cytoplasm. It catalyses the reaction tRNA(Val) + L-valine + ATP = L-valyl-tRNA(Val) + AMP + diphosphate. Its function is as follows. Catalyzes the attachment of valine to tRNA(Val). As ValRS can inadvertently accommodate and process structurally similar amino acids such as threonine, to avoid such errors, it has a 'posttransfer' editing activity that hydrolyzes mischarged Thr-tRNA(Val) in a tRNA-dependent manner. The polypeptide is Valine--tRNA ligase (Pseudomonas fluorescens (strain ATCC BAA-477 / NRRL B-23932 / Pf-5)).